Reading from the N-terminus, the 633-residue chain is Probable potassium transport system protein Kup (633 aa).

The next 12 helical transmembrane spans lie at 21-41 (MLVAAVGVVYGDIGTSPLYTL), 61-81 (ILSLIFWSLIWVVSIKYMMFV), 112-132 (LLVVCGLIGAALFYGDSMITP), 149-169 (GIDHWVVPLSLVVLVGLFLIQ), 176-196 (IGILFGPIMVTWFLVLGALGV), 217-237 (FFMVHTGMGVAILGAVVLALT), 258-278 (WFLLVLPALVLNYFGQGALLL), 290-310 (LLAPSWALIPLVGLSTLATVI), 348-368 (IYIGAVNWSLMVGVVLLVIGF), 377-397 (AYGVAVTGTMLMTTILVSAVM), 398-418 (LLLWKWPPILAVPVLIGFLLV), and 430-450 (IVQGGAFPVIAGIALFVLMTT).

It belongs to the HAK/KUP transporter (TC 2.A.72) family.

The protein resides in the cell inner membrane. The catalysed reaction is K(+)(in) + H(+)(in) = K(+)(out) + H(+)(out). In terms of biological role, transport of potassium into the cell. Likely operates as a K(+):H(+) symporter. This chain is Probable potassium transport system protein Kup, found in Pseudomonas fluorescens (strain Pf0-1).